Reading from the N-terminus, the 701-residue chain is Elongation factor G (701 aa).

One can recognise a tr-type G domain in the interval 8 to 290 (SLYRNIGISA…AVVELLPAPT (283 aa)). GTP-binding positions include 17–24 (AHIDAGKT), 88–92 (DTPGH), and 142–145 (NKMD).

Belongs to the TRAFAC class translation factor GTPase superfamily. Classic translation factor GTPase family. EF-G/EF-2 subfamily.

The protein localises to the cytoplasm. Functionally, catalyzes the GTP-dependent ribosomal translocation step during translation elongation. During this step, the ribosome changes from the pre-translocational (PRE) to the post-translocational (POST) state as the newly formed A-site-bound peptidyl-tRNA and P-site-bound deacylated tRNA move to the P and E sites, respectively. Catalyzes the coordinated movement of the two tRNA molecules, the mRNA and conformational changes in the ribosome. The protein is Elongation factor G of Neisseria gonorrhoeae (strain ATCC 700825 / FA 1090).